The following is a 468-amino-acid chain: POC1 centriolar protein homolog B (468 aa).

WD repeat units lie at residues 16–55 (GHKD…RAYK), 58–97 (GHKE…ESTV), 100–139 (AHTA…FLFS), 142–181 (QHTN…CINT), 184–223 (DYKG…LLQH), 226–265 (VHNA…LIYT), and 268–307 (GHQG…YSVK). Residues 420–459 (NTLEQIVDQLNVLTQTVSILEHRLTLTEDKLKECLENQQK) adopt a coiled-coil conformation.

It belongs to the WD repeat POC1 family. As to quaternary structure, interacts with pat. In terms of tissue distribution, highly expressed in ovary and, at low levels, in testis.

It localises to the cytoplasm. The protein localises to the cytoskeleton. Its subcellular location is the microtubule organizing center. It is found in the centrosome. The protein resides in the centriole. In terms of biological role, plays an important role in centriole assembly and/or stability and ciliogenesis. Involved in early steps of centriole duplication, as well as in the later steps of centriole length control. In Xenopus laevis (African clawed frog), this protein is POC1 centriolar protein homolog B (poc1b).